The primary structure comprises 375 residues: DNA replication and repair protein RecF (375 aa).

30 to 37 (GENAQGKT) is an ATP binding site.

This sequence belongs to the RecF family.

It is found in the cytoplasm. In terms of biological role, the RecF protein is involved in DNA metabolism; it is required for DNA replication and normal SOS inducibility. RecF binds preferentially to single-stranded, linear DNA. It also seems to bind ATP. The sequence is that of DNA replication and repair protein RecF from Bacillus cereus (strain G9842).